The chain runs to 343 residues: Stimulator of interferon genes protein homolog (343 aa).

An N-linked (GlcNAc...) asparagine glycan is attached at N84. Helical transmembrane passes span 87-107 and 109-129; these read IYLI…TGNY and NVMP…WSFT. N157 serves as a coordination point for 3',2'-cGAMP. An N-linked (GlcNAc...) asparagine glycan is attached at N187. Residues 195 to 215 form a helical membrane-spanning segment; it reads LVILIPDEMFVNGVLESHLLD. 3',2'-cGAMP contacts are provided by R232, K235, E255, T258, and S262. N-linked (GlcNAc...) asparagine glycosylation is found at N270 and N333.

The protein belongs to the STING family.

It localises to the endoplasmic reticulum membrane. Its function is as follows. Facilitator of innate immune signaling that binds cyclic dinucleotides produced in response to infection by bacteria and/or viruses, and promotes the activation of the NF-kappa-B transcription factor Rel (Relish). Recognizes and binds cyclic di-GMP (c-di-GMP), a cyclic dinucleotide messenger produced by bacteria such as L.monocytogenes, leading to activation of the peptidoglycan recognition protein (IMD) signaling pathway and activation of Rel (Relish). Innate immune response is triggered in response to double-stranded RNA from viruses delivered to the cytoplasm: Sting acts by specifically binding cyclic dinucleotides 3',2'-cGAMP and 2',3'-cGAMP produced by cGlr1 and cGlr2 in response to RNA virus in the cytosol. Has a strong preference for 3',2'-cGAMP compared to other cyclic dinucleotides such as 2',3'-cGAMP or 3'3'-c-di-GMP. Upon binding to 3',2'-cGAMP, activates an antiviral immune response, leading to the activation of Rel (Relish). Activated in brain in response to Zika virus infection, leading to autophagy. The chain is Stimulator of interferon genes protein homolog from Drosophila melanogaster (Fruit fly).